A 91-amino-acid chain; its full sequence is Putative defensin-like protein 145 (91 aa).

Residues 1-26 (MNKNIIFSFTVLTLFVIFVQVTGVIG) form the signal peptide. N-linked (GlcNAc...) asparagine glycans are attached at residues Asn-35 and Asn-68. Disulfide bonds link Cys-39–Cys-84, Cys-52–Cys-74, Cys-57–Cys-78, and Cys-61–Cys-80.

It belongs to the DEFL family.

It localises to the secreted. The sequence is that of Putative defensin-like protein 145 (LCR2) from Arabidopsis thaliana (Mouse-ear cress).